Here is a 603-residue protein sequence, read N- to C-terminus: Aspartate--tRNA(Asp/Asn) ligase (603 aa).

Residues 205–208 are aspartate; sequence QLFK. Arg-227 is an L-aspartate binding site. ATP-binding positions include 227–229 and Gln-236; that span reads RDE. His-463 provides a ligand contact to L-aspartate. Position 497 (Glu-497) interacts with ATP. An L-aspartate-binding site is contributed by Arg-504. 549–552 provides a ligand contact to ATP; that stretch reads GMDR.

The protein belongs to the class-II aminoacyl-tRNA synthetase family. Type 1 subfamily. As to quaternary structure, homodimer.

Its subcellular location is the cytoplasm. It carries out the reaction tRNA(Asx) + L-aspartate + ATP = L-aspartyl-tRNA(Asx) + AMP + diphosphate. Its function is as follows. Aspartyl-tRNA synthetase with relaxed tRNA specificity since it is able to aspartylate not only its cognate tRNA(Asp) but also tRNA(Asn). Reaction proceeds in two steps: L-aspartate is first activated by ATP to form Asp-AMP and then transferred to the acceptor end of tRNA(Asp/Asn). In Anaeromyxobacter sp. (strain K), this protein is Aspartate--tRNA(Asp/Asn) ligase.